The chain runs to 393 residues: S-adenosylmethionine synthase (393 aa).

An ATP-binding site is contributed by His17. Asp19 is a binding site for Mg(2+). Glu45 lines the K(+) pocket. Residues Glu58 and Gln106 each contribute to the L-methionine site. Positions 106–116 (QSAHIAQGVDA) are flexible loop. Residues 171–173 (DAK), 237–238 (KF), Asp246, 252–253 (RK), Ala269, and Lys273 each bind ATP. Asp246 serves as a coordination point for L-methionine. Lys277 serves as a coordination point for L-methionine.

This sequence belongs to the AdoMet synthase family. As to quaternary structure, homotetramer; dimer of dimers. Mg(2+) serves as cofactor. It depends on K(+) as a cofactor.

It localises to the cytoplasm. It catalyses the reaction L-methionine + ATP + H2O = S-adenosyl-L-methionine + phosphate + diphosphate. It participates in amino-acid biosynthesis; S-adenosyl-L-methionine biosynthesis; S-adenosyl-L-methionine from L-methionine: step 1/1. Its function is as follows. Catalyzes the formation of S-adenosylmethionine (AdoMet) from methionine and ATP. The overall synthetic reaction is composed of two sequential steps, AdoMet formation and the subsequent tripolyphosphate hydrolysis which occurs prior to release of AdoMet from the enzyme. The chain is S-adenosylmethionine synthase from Jannaschia sp. (strain CCS1).